The sequence spans 286 residues: 4-hydroxybenzoate octaprenyltransferase (286 aa).

Helical transmembrane passes span 20–40 (IGTLLLLWPCLMALVLAAGGM), 43–63 (LKVLIIFIIGVVIMRACGCII), 96–116 (LFVILGLAAFGLVLLLNGLVV), 142–162 (FLGVVWSWSIPMAYAAQTGEV), 167–187 (WWLFAANWFWTVAYDTMYAMV), 210–230 (QIIGLFQIAALFCFVAAGWSA), 235–255 (VYGLGLLTFVGFSTYQQMLIF), and 266–286 (FLNNNWAGLVLFVSLGADYLF).

The protein belongs to the UbiA prenyltransferase family. Requires Mg(2+) as cofactor.

Its subcellular location is the cell inner membrane. The enzyme catalyses all-trans-octaprenyl diphosphate + 4-hydroxybenzoate = 4-hydroxy-3-(all-trans-octaprenyl)benzoate + diphosphate. It participates in cofactor biosynthesis; ubiquinone biosynthesis. Catalyzes the prenylation of para-hydroxybenzoate (PHB) with an all-trans polyprenyl group. Mediates the second step in the final reaction sequence of ubiquinone-8 (UQ-8) biosynthesis, which is the condensation of the polyisoprenoid side chain with PHB, generating the first membrane-bound Q intermediate 3-octaprenyl-4-hydroxybenzoate. The chain is 4-hydroxybenzoate octaprenyltransferase from Shewanella oneidensis (strain ATCC 700550 / JCM 31522 / CIP 106686 / LMG 19005 / NCIMB 14063 / MR-1).